The chain runs to 182 residues: Flagellar transcriptional regulator FlhC (182 aa).

The Zn(2+) site is built by cysteine 138, cysteine 141, cysteine 158, and cysteine 161.

It belongs to the FlhC family. Heterohexamer composed of two FlhC and four FlhD subunits. Each FlhC binds a FlhD dimer, forming a heterotrimer, and a hexamer assembles by dimerization of two heterotrimers. Zn(2+) serves as cofactor.

Its subcellular location is the cytoplasm. Functions in complex with FlhD as a master transcriptional regulator that regulates transcription of several flagellar and non-flagellar operons by binding to their promoter region. Activates expression of class 2 flagellar genes, including fliA, which is a flagellum-specific sigma factor that turns on the class 3 genes. Also regulates genes whose products function in a variety of physiological pathways. This Gallionella capsiferriformans (strain ES-2) (Gallionella ferruginea capsiferriformans (strain ES-2)) protein is Flagellar transcriptional regulator FlhC.